The sequence spans 185 residues: Ribosome-recycling factor (185 aa).

Belongs to the RRF family.

The protein resides in the cytoplasm. Responsible for the release of ribosomes from messenger RNA at the termination of protein biosynthesis. May increase the efficiency of translation by recycling ribosomes from one round of translation to another. This is Ribosome-recycling factor from Pseudomonas aeruginosa (strain LESB58).